The chain runs to 553 residues: Chaperonin GroEL (553 aa).

ATP contacts are provided by residues 29-32 (TLGP), K50, 86-90 (DGTTT), G424, and D504.

This sequence belongs to the chaperonin (HSP60) family. Forms a cylinder of 14 subunits composed of two heptameric rings stacked back-to-back. Interacts with the co-chaperonin GroES.

The protein localises to the cytoplasm. The enzyme catalyses ATP + H2O + a folded polypeptide = ADP + phosphate + an unfolded polypeptide.. In terms of biological role, together with its co-chaperonin GroES, plays an essential role in assisting protein folding. The GroEL-GroES system forms a nano-cage that allows encapsulation of the non-native substrate proteins and provides a physical environment optimized to promote and accelerate protein folding. This is Chaperonin GroEL from Koribacter versatilis (strain Ellin345).